The chain runs to 359 residues: DNA polymerase IV (359 aa).

The UmuC domain maps to isoleucine 7–glycine 188. Mg(2+)-binding residues include aspartate 11 and aspartate 106. Residue glutamate 107 is part of the active site.

It belongs to the DNA polymerase type-Y family. As to quaternary structure, monomer. Mg(2+) serves as cofactor.

It localises to the cytoplasm. The catalysed reaction is DNA(n) + a 2'-deoxyribonucleoside 5'-triphosphate = DNA(n+1) + diphosphate. In terms of biological role, poorly processive, error-prone DNA polymerase involved in untargeted mutagenesis. Copies undamaged DNA at stalled replication forks, which arise in vivo from mismatched or misaligned primer ends. These misaligned primers can be extended by PolIV. Exhibits no 3'-5' exonuclease (proofreading) activity. May be involved in translesional synthesis, in conjunction with the beta clamp from PolIII. This chain is DNA polymerase IV, found in Clostridium perfringens (strain SM101 / Type A).